A 642-amino-acid polypeptide reads, in one-letter code: Kinesin-like protein KIN-7L (642 aa).

A Kinesin motor domain is found at K3–V337. Residues P12 to T27 show a composition bias toward low complexity. Residues P12–W33 form a disordered region. G94–T101 contacts ATP. Coiled-coil stretches lie at residues V343 to S428 and R540 to A612.

It belongs to the TRAFAC class myosin-kinesin ATPase superfamily. Kinesin family. KIN-7 subfamily.

The polypeptide is Kinesin-like protein KIN-7L (Oryza sativa subsp. japonica (Rice)).